The chain runs to 272 residues: Phosphatidylglycerol--prolipoprotein diacylglyceryl transferase (272 aa).

3 consecutive transmembrane segments (helical) span residues 19-39, 58-78, and 94-114; these read ISIR…YFLV, LNTV…VVFY, and WHGG…GLIF. Arg141 contacts a 1,2-diacyl-sn-glycero-3-phospho-(1'-sn-glycerol). 2 helical membrane-spanning segments follow: residues 207 to 227 and 234 to 254; these read GTIL…IENF and LGFI…MILC.

Belongs to the Lgt family.

The protein resides in the cell inner membrane. It carries out the reaction L-cysteinyl-[prolipoprotein] + a 1,2-diacyl-sn-glycero-3-phospho-(1'-sn-glycerol) = an S-1,2-diacyl-sn-glyceryl-L-cysteinyl-[prolipoprotein] + sn-glycerol 1-phosphate + H(+). It participates in protein modification; lipoprotein biosynthesis (diacylglyceryl transfer). Its function is as follows. Catalyzes the transfer of the diacylglyceryl group from phosphatidylglycerol to the sulfhydryl group of the N-terminal cysteine of a prolipoprotein, the first step in the formation of mature lipoproteins. This is Phosphatidylglycerol--prolipoprotein diacylglyceryl transferase from Desulfotalea psychrophila (strain LSv54 / DSM 12343).